The sequence spans 227 residues: Cytochrome c oxidase subunit 2 (227 aa).

The Mitochondrial intermembrane portion of the chain corresponds to 1–14; the sequence is MAHPVQLGLQDATS. Residues 15–45 traverse the membrane as a helical segment; that stretch reads PVMEELVTFHDHALMAMFLISFLILYALSAT. Residues 46 to 59 lie on the Mitochondrial matrix side of the membrane; that stretch reads LTTKLTNTNITDAQ. Residues 60 to 87 traverse the membrane as a helical segment; sequence EMETIWTILPAVILVLIALPSLRILYMT. The Mitochondrial intermembrane segment spans residues 88-227; that stretch reads DEINNPSFTI…IFEMGPVFTL (140 aa). Positions 161, 196, 198, 200, 204, and 207 each coordinate Cu cation. Glu-198 is a binding site for Mg(2+).

It belongs to the cytochrome c oxidase subunit 2 family. As to quaternary structure, component of the cytochrome c oxidase (complex IV, CIV), a multisubunit enzyme composed of 14 subunits. The complex is composed of a catalytic core of 3 subunits MT-CO1, MT-CO2 and MT-CO3, encoded in the mitochondrial DNA, and 11 supernumerary subunits COX4I, COX5A, COX5B, COX6A, COX6B, COX6C, COX7A, COX7B, COX7C, COX8 and NDUFA4, which are encoded in the nuclear genome. The complex exists as a monomer or a dimer and forms supercomplexes (SCs) in the inner mitochondrial membrane with NADH-ubiquinone oxidoreductase (complex I, CI) and ubiquinol-cytochrome c oxidoreductase (cytochrome b-c1 complex, complex III, CIII), resulting in different assemblies (supercomplex SCI(1)III(2)IV(1) and megacomplex MCI(2)III(2)IV(2)). Found in a complex with TMEM177, COA6, COX18, COX20, SCO1 and SCO2. Interacts with TMEM177 in a COX20-dependent manner. Interacts with COX20. Interacts with COX16. It depends on Cu cation as a cofactor.

The protein resides in the mitochondrion inner membrane. It carries out the reaction 4 Fe(II)-[cytochrome c] + O2 + 8 H(+)(in) = 4 Fe(III)-[cytochrome c] + 2 H2O + 4 H(+)(out). Functionally, component of the cytochrome c oxidase, the last enzyme in the mitochondrial electron transport chain which drives oxidative phosphorylation. The respiratory chain contains 3 multisubunit complexes succinate dehydrogenase (complex II, CII), ubiquinol-cytochrome c oxidoreductase (cytochrome b-c1 complex, complex III, CIII) and cytochrome c oxidase (complex IV, CIV), that cooperate to transfer electrons derived from NADH and succinate to molecular oxygen, creating an electrochemical gradient over the inner membrane that drives transmembrane transport and the ATP synthase. Cytochrome c oxidase is the component of the respiratory chain that catalyzes the reduction of oxygen to water. Electrons originating from reduced cytochrome c in the intermembrane space (IMS) are transferred via the dinuclear copper A center (CU(A)) of subunit 2 and heme A of subunit 1 to the active site in subunit 1, a binuclear center (BNC) formed by heme A3 and copper B (CU(B)). The BNC reduces molecular oxygen to 2 water molecules using 4 electrons from cytochrome c in the IMS and 4 protons from the mitochondrial matrix. The protein is Cytochrome c oxidase subunit 2 (MT-CO2) of Theropithecus gelada (Gelada baboon).